Reading from the N-terminus, the 529-residue chain is Basal body-orientation factor 1 (529 aa).

Over residues 1-13 (MPSKGKDKKKGKS) the composition is skewed to basic residues. Residues 1–22 (MPSKGKDKKKGKSKGKDTKKLI) form a disordered region. 2 coiled-coil regions span residues 85 to 201 (LKKQ…EAEK) and 271 to 361 (VKEK…EVER).

This sequence belongs to the BBOF1 family. As to quaternary structure, interacts with MNS1 and ODF2.

The protein localises to the cytoplasm. It localises to the cytoskeleton. Its subcellular location is the cilium basal body. It is found in the flagellum axoneme. In terms of biological role, plays an essential role in sperm motility and male fertility by stabilizing the sperm flagellar axonemal structure. May be required for the stability of ODF2 and MANS1 proteins. Dispensable for the assembly and function of motile cilia. This chain is Basal body-orientation factor 1, found in Homo sapiens (Human).